A 335-amino-acid chain; its full sequence is Fructose-1,6-bisphosphatase class 1 (335 aa).

Residues Glu93, Asp117, Leu119, and Asp120 each coordinate Mg(2+). Substrate-binding positions include 120-123 (DGSS), Asn213, Tyr244, and Lys274. Glu280 contributes to the Mg(2+) binding site.

It belongs to the FBPase class 1 family. Homotetramer. Mg(2+) serves as cofactor.

The protein resides in the cytoplasm. It catalyses the reaction beta-D-fructose 1,6-bisphosphate + H2O = beta-D-fructose 6-phosphate + phosphate. The protein operates within carbohydrate biosynthesis; gluconeogenesis. The polypeptide is Fructose-1,6-bisphosphatase class 1 (Flavobacterium psychrophilum (strain ATCC 49511 / DSM 21280 / CIP 103535 / JIP02/86)).